The chain runs to 462 residues: Sugar transporter ERD6-like 12 (462 aa).

A run of 12 helical transmembrane segments spans residues 25–45, 62–82, 101–121, 124–144, 151–171, 179–199, 262–282, 297–317, 326–346, 358–378, 399–419, and 424–444; these read LLIFSTFIIVSASFTFGAAIG, LAQFSLFGSLSTFGGMIGAIF, LFCITGWLAISLAKDIIWLDM, FLVGIGVGLISYVVPVYIAEI, GAFTFSNQLLQNCGVAVVYYF, TLAIIGSIPCWIQVIGLFFIP, LTIGIGLMLLQQLCGTAGISS, IGMMVLSLIVVPKSLMGLILV, LMTSALGLCLSCITLAVAFGV, IFCFIGILSFTMMFAIGMGAL, VTIANWFTGWIANYAFNFMLV, and GTFIISAIICGATIVFTWCLV.

The protein belongs to the major facilitator superfamily. Sugar transporter (TC 2.A.1.1) family.

It is found in the membrane. Its function is as follows. Sugar transporter. The polypeptide is Sugar transporter ERD6-like 12 (SUGTL5) (Arabidopsis thaliana (Mouse-ear cress)).